The chain runs to 135 residues: MNPLVYFSSQSENTHRFICRVDLPALRIPIATEQPALKVDRPYILVVPSYGGGSTKGAVPRQVIIFLNDPHNRAYLRGVIAAGNTNFGAAYCIAGDIIAQKCQVPYLYRFELLGTAEDVANVRKGVTEFWQQQTT.

The protein belongs to the NrdI family.

Functionally, probably involved in ribonucleotide reductase function. The polypeptide is Protein NrdI (Pectobacterium atrosepticum (strain SCRI 1043 / ATCC BAA-672) (Erwinia carotovora subsp. atroseptica)).